Here is a 164-residue protein sequence, read N- to C-terminus: Endoribonuclease YbeY (164 aa).

Residues histidine 117, histidine 121, and histidine 127 each contribute to the Zn(2+) site.

It belongs to the endoribonuclease YbeY family. The cofactor is Zn(2+).

It localises to the cytoplasm. Single strand-specific metallo-endoribonuclease involved in late-stage 70S ribosome quality control and in maturation of the 3' terminus of the 16S rRNA. In Mycoplasma mycoides subsp. mycoides SC (strain CCUG 32753 / NCTC 10114 / PG1), this protein is Endoribonuclease YbeY.